The following is a 281-amino-acid chain: uncharacterized protein (281 aa).

4 consecutive transmembrane segments (helical) span residues 8 to 28 (ALPVVAIVALVASGVITFIWS), 97 to 117 (LAVALHGLGLSVLLFDYRGYG), 147 to 167 (PARIAYFGESLGAAVAVGLAV), and 210 to 230 (IASVHAPVLVIAGGSDDIVPA).

This sequence to S.pombe bem46 and yeast YNL320w.

The protein resides in the cell membrane. This is an uncharacterized protein from Mycobacterium tuberculosis (strain CDC 1551 / Oshkosh).